The chain runs to 212 residues: Inner membrane-spanning protein YciB (212 aa).

The next 5 helical transmembrane spans lie at 49–69, 78–98, 105–125, 150–170, and 178–198; these read APVLLATVVVILATLAQVLYL, TMLWVSLGLVTVMGGATIWFH, WKPSVLYWVMSAAFLLAPIVA, LAWAAFFAGMGVLNIWVAYNF, and FKAFGGMGLMFVFMLAQGLYM.

This sequence belongs to the YciB family.

The protein resides in the cell inner membrane. Its function is as follows. Plays a role in cell envelope biogenesis, maintenance of cell envelope integrity and membrane homeostasis. In Leptothrix cholodnii (strain ATCC 51168 / LMG 8142 / SP-6) (Leptothrix discophora (strain SP-6)), this protein is Inner membrane-spanning protein YciB.